The primary structure comprises 1059 residues: Ubiquitin carboxyl-terminal hydrolase 36 (1059 aa).

Disordered regions lie at residues 22-45 (LGGN…NGSL) and 102-145 (GKLV…KPKR). Polar residues predominate over residues 23–45 (GGNSSAGSSTDQAKSGEDTNGSL). Residues 121-138 (HPNNQSHHNHPHPTSNPN) show a composition bias toward low complexity. The USP domain occupies 168-457 (TGMINVGNTC…NAYIMFFELD (290 aa)). The Nucleophile role is filled by Cys-177. His-416 acts as the Proton acceptor in catalysis. Disordered regions lie at residues 464–512 (PPAN…YTNG), 554–853 (ATSA…VTSN), 941–1005 (RQRD…FYNQ), and 1022–1059 (FGGA…QQQT). 2 stretches are compositionally biased toward low complexity: residues 479–494 (STTP…PSPT) and 561–580 (NGNK…KSIN). Phosphoserine is present on residues Ser-490 and Ser-492. Polar residues predominate over residues 603 to 615 (TTAQLPSMPNMTE). Phosphothreonine is present on residues Thr-632 and Thr-636. Ser-646 and Ser-648 each carry phosphoserine. Residues 673–702 (ESGQTNGHSKTNGSLTNGSASSSVHVNNSK) are compositionally biased toward polar residues. The span at 703–720 (QKTDAIDEIFKSLKKSAD) shows a compositional bias: basic and acidic residues. A Phosphoserine modification is found at Ser-721. Over residues 721–730 (SEEDDDEEEP) the composition is skewed to acidic residues. Over residues 740-750 (PQKQSQSQSKA) the composition is skewed to low complexity. Positions 751 to 760 (PPSPKTPPSP) are enriched in pro residues. Ser-753 is modified (phosphoserine). Thr-756 bears the Phosphothreonine mark. The residue at position 759 (Ser-759) is a Phosphoserine. Acidic residues predominate over residues 779-788 (DAIDDDDDAV). At Thr-799 the chain carries Phosphothreonine. Over residues 806 to 818 (NPFSSSKPSTDSP) the composition is skewed to polar residues. Ser-817 bears the Phosphoserine mark. Thr-820 is subject to Phosphothreonine. Over residues 833–853 (ALKSHQQPRVGNGYQSNVTSN) the composition is skewed to polar residues. A compositionally biased stretch (low complexity) spans 963-974 (SGSAKGNNASNS).

Belongs to the peptidase C19 family. As to quaternary structure, interacts with atms/PAF1, but not with CycT.

It is found in the nucleus. The protein localises to the nucleolus. The catalysed reaction is Thiol-dependent hydrolysis of ester, thioester, amide, peptide and isopeptide bonds formed by the C-terminal Gly of ubiquitin (a 76-residue protein attached to proteins as an intracellular targeting signal).. In terms of biological role, required for maintaining multiple types of adult stem cells, including male and female germline, epithelial follicle cell and intestinal stem cells. May function as a transcriptional repressor by continually deubiquiting histone H2B at the promoters of genes critical for cellular differentiation, thereby preventing histone H3 'Lys-4' trimethylation (H3K4). Controls selective autophagy activation by ubiquitinated proteins. This chain is Ubiquitin carboxyl-terminal hydrolase 36 (Usp36), found in Drosophila sechellia (Fruit fly).